Reading from the N-terminus, the 478-residue chain is UBP1-associated protein 2A (478 aa).

Positions 1-99 (MTKKRKLEGE…NQEDDDDEPI (99 aa)) are disordered. Residues 41–75 (GDVEEVEYEEVEEEQEEEVEDDDDEDDGDENEDQT) show a composition bias toward acidic residues. RRM domains follow at residues 140-217 (RKIF…LASK) and 245-328 (KKIY…KPGK). 2 disordered regions span residues 321 to 359 (IDGP…GGHG) and 442 to 478 (GTQP…YMGH). A compositionally biased stretch (low complexity) spans 442–456 (GTQPGLQGGYQTPQP). Over residues 457-470 (GQGGTSRGQHGVGP) the composition is skewed to gly residues.

In terms of assembly, interacts with UBA1A, UBA2A, UBP1A, UBP1B, UBP1C and SRK2E. Expressed in young leaves, flowers and embryos.

It is found in the nucleus. Heterogeneous nuclear ribonucleoprotein (hnRNP)-like protein that acts as a component of a complex regulating the turnover of mRNAs in the nucleus. Binds with high affinity to RNA molecules that contain U-rich sequences in 3'-UTRs. May function in complex with UBP1 and contribute to the stabilization of mRNAs in the nucleus. However, unlike UBP1, UBA2A does not stimulate pre-mRNA splicing. The protein is UBP1-associated protein 2A (UBA2A) of Arabidopsis thaliana (Mouse-ear cress).